The following is a 191-amino-acid chain: GDP-mannose pyrophosphatase (191 aa).

GDP-alpha-D-mannose contacts are provided by residues Tyr-17, 38–40 (KRE), Arg-67, and 85–87 (AGL). In terms of domain architecture, Nudix hydrolase spans 43-180 (DRGNGATILL…EIRDGKTVLL (138 aa)). Mg(2+) contacts are provided by Ala-85, Glu-100, and Glu-104. The Nudix box signature appears at 86 to 106 (GLLDNDEPEVCIRKEAIEETG). Residues Glu-104, Glu-127, 150–151 (DE), and Lys-176 contribute to the GDP-alpha-D-mannose site. Residue Glu-151 participates in Mg(2+) binding.

Belongs to the Nudix hydrolase family. NudK subfamily. As to quaternary structure, homodimer. It depends on Mg(2+) as a cofactor.

The catalysed reaction is GDP-alpha-D-mannose + H2O = alpha-D-mannose 1-phosphate + GMP + 2 H(+). Nucleoside diphosphate sugar hydrolase that hydrolyzes GDP-mannose as its preferred substrate, yielding GMP and mannose-1-phosphate. The polypeptide is GDP-mannose pyrophosphatase (nudK) (Salmonella typhi).